A 491-amino-acid chain; its full sequence is Aspartyl/glutamyl-tRNA(Asn/Gln) amidotransferase subunit B (491 aa).

The protein belongs to the GatB/GatE family. GatB subfamily. As to quaternary structure, heterotrimer of A, B and C subunits.

It catalyses the reaction L-glutamyl-tRNA(Gln) + L-glutamine + ATP + H2O = L-glutaminyl-tRNA(Gln) + L-glutamate + ADP + phosphate + H(+). The enzyme catalyses L-aspartyl-tRNA(Asn) + L-glutamine + ATP + H2O = L-asparaginyl-tRNA(Asn) + L-glutamate + ADP + phosphate + 2 H(+). Allows the formation of correctly charged Asn-tRNA(Asn) or Gln-tRNA(Gln) through the transamidation of misacylated Asp-tRNA(Asn) or Glu-tRNA(Gln) in organisms which lack either or both of asparaginyl-tRNA or glutaminyl-tRNA synthetases. The reaction takes place in the presence of glutamine and ATP through an activated phospho-Asp-tRNA(Asn) or phospho-Glu-tRNA(Gln). The polypeptide is Aspartyl/glutamyl-tRNA(Asn/Gln) amidotransferase subunit B (Prochlorococcus marinus (strain NATL2A)).